The primary structure comprises 413 residues: DNA polymerase IV 1 (413 aa).

The UmuC domain occupies 7-188 (IFHVDMNSFY…LPIEEMYGIG (182 aa)). Mg(2+) contacts are provided by Asp11 and Asp107. Glu108 is an active-site residue.

The protein belongs to the DNA polymerase type-Y family. In terms of assembly, monomer. Mg(2+) is required as a cofactor.

It localises to the cytoplasm. It carries out the reaction DNA(n) + a 2'-deoxyribonucleoside 5'-triphosphate = DNA(n+1) + diphosphate. Functionally, poorly processive, error-prone DNA polymerase involved in untargeted mutagenesis. Copies undamaged DNA at stalled replication forks, which arise in vivo from mismatched or misaligned primer ends. These misaligned primers can be extended by PolIV. Exhibits no 3'-5' exonuclease (proofreading) activity. May be involved in translesional synthesis, in conjunction with the beta clamp from PolIII. The polypeptide is DNA polymerase IV 1 (dinB1) (Halalkalibacterium halodurans (strain ATCC BAA-125 / DSM 18197 / FERM 7344 / JCM 9153 / C-125) (Bacillus halodurans)).